A 586-amino-acid polypeptide reads, in one-letter code: Old nuclease (586 aa).

The tract at residues 1 to 163 (MTVRLASVSI…VEDSTKCKNT (163 aa)) is ATPase domain N-terminus. Residue 34–38 (NAGKS) coordinates ATP. The segment at 164-270 (TTIGKILSAI…SRFGHGTQRS (107 aa)) is dimerization domain. Positions 271 to 390 (IQMALIQYLA…TLSNSSYLLF (120 aa)) are ATPase domain C-terminus. The segment at 393 to 586 (EVLLVEGKTE…DEMEDFIKWI (194 aa)) is toprim domain. A divalent metal cation is bound by residues Glu398, Glu402, Asp453, Asp455, Asp541, and Glu543. The active-site Stabilizes transition state or protonates leaving group is Arg570.

This sequence belongs to the class 1 OLD nuclease family. Mg(2+) is required as a cofactor.

It carries out the reaction Exonucleolytic cleavage in the 5'- to 3'-direction to yield nucleoside 5'-phosphates.. Functionally, an exonuclease that acts preferentially on linear dsDNA, processively degrading it from 5'-3', releasing 5'-phosphomononucleotides. Initiates on 5'-phosphate and 5'-hydroxyl ends. Also acts on linear ssDNA, nicked DNA and RNA. ATP enhances but is not necessary for exonuclease activity; has ATPase activity that is not stimulated by DNA. The old protein kills E.coli recB and recC mutants and interferes with phage lambda growth. Both the exonuclease and ATPase activities are required in vivo. Probably interferes with lambda phage by degrading its linear DNA. Isolated as a mutant able to lysogenize E.coli strain C cells normally not susceptible to lysis by phage P2. In Enterobacteriaceae (Bacteriophage P2), this protein is Old nuclease.